The sequence spans 86 residues: Actinorhodin polyketide synthase acyl carrier protein (86 aa).

The Carrier domain occupies Leu4 to Leu82. Ser42 carries the post-translational modification O-(pantetheine 4'-phosphoryl)serine.

Post-translationally, 4'-phosphopantetheine is transferred from CoA to a specific serine of the apo-ACP-like protein.

Its pathway is antibiotic biosynthesis; actinorhodin biosynthesis. Its function is as follows. Acyl carrier protein. In Streptomyces coelicolor (strain ATCC BAA-471 / A3(2) / M145), this protein is Actinorhodin polyketide synthase acyl carrier protein.